The sequence spans 1392 residues: Leucine-rich PPR motif-containing protein, mitochondrial (1392 aa).

The transit peptide at 1-59 directs the protein to the mitochondrion; sequence MAALLRPARWLLGAAAAPRLPLSLRLPAGVPGRLSSVVRVAAVGSRPAAGERLSQARLY. PPR repeat units lie at residues 125–159, 160–194, 195–229, 230–264, 265–299, 300–334, 402–436, 437–471, 677–708, 709–745, 746–783, 784–820, 821–856, and 953–987; these read LLRS…GVVY, DVSH…NIQP, NRVT…DLPI, TEAV…GIEP, GPDT…DHYF, MDRD…RRSI, HSSS…GFPI, RPHY…GVDP, VGSA…ESDM, VIGG…SAIL, DTAK…IKDA, TVLS…AKPS, SNIS…VLPR, and RDQM…NIIP. An N6-acetyllysine mark is found at Lys151, Lys186, and Lys225. Position 291 is an N6-acetyllysine (Lys291). The residue at position 462 (Lys462) is an N6-acetyllysine. Residue Lys749 is modified to N6-acetyllysine. Residues 931-1050 are RNA-binding; the sequence is ASNQVEALEK…NCKLKKSKDA (120 aa). Phosphoserine occurs at positions 1025, 1026, and 1028. 6 PPR repeats span residues 1030–1064, 1065–1101, 1102–1136, 1137–1175, 1176–1210, and 1315–1349; these read GEDV…NVVF, SSET…GFTL, NDAA…KQVP, SQIA…LSKM, VFIN…QAIE, and NDKV…NLKL. Ser1137 is subject to Phosphoserine.

In terms of assembly, component of mRNP complexes associated with HNRPA1. Component of the complex, at least composed of LRPPRC, BECN1 and BCL2; the interactions prevent BECN1 from forming an autophagy-inducing complex with PIK3C3. Interacts with CECR2, HEBP2, MAP1S and UXT. Interacts with PPARGC1A. Interacts with FOXO1. Interacts (via N-terminus) with EIF4E; the interaction promotes association of EIF4E with 4ESE-containing mRNAs. Interacts with exportin XPO1/CRM1; interacts both alone and in complex with EIF4E and 4ESE-containing mRNAs to form an EIF4E-dependent mRNA export complex. Interacts with importin IPO8; the interaction occurs when LRPPRC is in its RNA-free form and returns LRPPRC to the nucleus for further export rounds. Interacts with BECN1. In terms of tissue distribution, strongly expressed in heart, liver and kidney. Weakly expressed in brain, skeletal muscle and testes.

The protein resides in the mitochondrion. Its subcellular location is the nucleus. It is found in the nucleoplasm. The protein localises to the nucleus inner membrane. It localises to the nucleus outer membrane. In terms of biological role, may play a role in RNA metabolism in both nuclei and mitochondria. In the nucleus binds to HNRPA1-associated poly(A) mRNAs and is part of nmRNP complexes at late stages of mRNA maturation which are possibly associated with nuclear mRNA export. Positively modulates nuclear export of mRNAs containing the EIF4E sensitivity element (4ESE) by binding simultaneously to both EIF4E and the 4ESE and acting as a platform for assembly for the RNA export complex. Also binds to exportin XPO1/CRM1 to engage the nuclear pore and traffic the bound mRNAs to the cytoplasm. May bind mature mRNA in the nucleus outer membrane. In mitochondria binds to poly(A) mRNA. Plays a role in translation or stability of mitochondrially encoded cytochrome c oxidase (COX) subunits. May be involved in transcription regulation. Cooperates with PPARGC1A to regulate certain mitochondrially encoded genes and gluconeogenic genes and may regulate docking of PPARGC1A to transcription factors. Seems to be involved in the transcription regulation of the multidrug-related genes MDR1 and MVP. Part of a nuclear factor that binds to the invMED1 element of MDR1 and MVP gene promoters. Binds single-stranded DNA. Required for maintaining mitochondrial potential. Suppresses the initiation of basal levels of autophagy and mitophagy by sustaining BCL2 levels. This chain is Leucine-rich PPR motif-containing protein, mitochondrial (Lrpprc), found in Mus musculus (Mouse).